Reading from the N-terminus, the 210-residue chain is Redox-sensing transcriptional repressor Rex (210 aa).

Positions 17 to 56 form a DNA-binding region, H-T-H motif; the sequence is KYYRYLAELMDNDVDRISSKELSEKIGFTASQIRQDLNNF. 91–96 lines the NAD(+) pocket; sequence GAGNIG.

Belongs to the transcriptional regulatory Rex family. Homodimer.

It localises to the cytoplasm. Functionally, modulates transcription in response to changes in cellular NADH/NAD(+) redox state. This chain is Redox-sensing transcriptional repressor Rex, found in Clostridium novyi (strain NT).